A 343-amino-acid chain; its full sequence is Acetylglutamate kinase (343 aa).

Residues 98–99 (GG), Arg120, and Asn219 contribute to the substrate site.

This sequence belongs to the acetylglutamate kinase family. ArgB subfamily.

Its subcellular location is the cytoplasm. The catalysed reaction is N-acetyl-L-glutamate + ATP = N-acetyl-L-glutamyl 5-phosphate + ADP. Its pathway is amino-acid biosynthesis; L-arginine biosynthesis; N(2)-acetyl-L-ornithine from L-glutamate: step 2/4. Its function is as follows. Catalyzes the ATP-dependent phosphorylation of N-acetyl-L-glutamate. In Frankia alni (strain DSM 45986 / CECT 9034 / ACN14a), this protein is Acetylglutamate kinase.